The sequence spans 488 residues: Katanin p60 ATPase-containing subunit A-like 1 (488 aa).

A disordered region spans residues 84 to 184; the sequence is FPNPVPEEGP…EQKKFDGTGY (101 aa). Residues 144–167 show a composition bias toward basic and acidic residues; it reads KPDRPNTRDGRGNKAKEEKSKRNA. 246 to 253 lines the ATP pocket; the sequence is GPPGTGKT.

Belongs to the AAA ATPase family. Katanin p60 subunit A1 subfamily. A-like 1 sub-subfamily.

Its subcellular location is the cytoplasm. It localises to the cytoskeleton. It is found in the spindle pole. The protein localises to the spindle. The catalysed reaction is n ATP + n H2O + a microtubule = n ADP + n phosphate + (n+1) alpha/beta tubulin heterodimers.. Its function is as follows. Regulates microtubule dynamics in Sertoli cells, a process that is essential for spermiogenesis and male fertility. Severs microtubules in an ATP-dependent manner, promoting rapid reorganization of cellular microtubule arrays. This Danio rerio (Zebrafish) protein is Katanin p60 ATPase-containing subunit A-like 1 (katnal1).